We begin with the raw amino-acid sequence, 117 residues long: MSNIIDEIDKASMRDDIPEFRPGDSVKVHVKVVEGSRTRVQVFSGIVISRTGGGVQESFTVRKLSFGTGVERTFPLHSPIIDKIEVDRHGAVRRAKLYYLRGRRGKAAKIKERGSAR.

Belongs to the bacterial ribosomal protein bL19 family.

In terms of biological role, this protein is located at the 30S-50S ribosomal subunit interface and may play a role in the structure and function of the aminoacyl-tRNA binding site. The sequence is that of Large ribosomal subunit protein bL19 from Cutibacterium acnes (strain DSM 16379 / KPA171202) (Propionibacterium acnes).